We begin with the raw amino-acid sequence, 569 residues long: AsmA family protein YicH (569 aa).

At 1–6 (MKFIGK) the chain is on the cytoplasmic side. A helical membrane pass occupies residues 7-27 (LLLYILIALLVAIAGLYFLLQ). The Periplasmic segment spans residues 28–569 (TRWGAEHISA…GEVTSTEPVR (542 aa)).

It belongs to the AsmA family.

It is found in the cell inner membrane. This is AsmA family protein YicH (yicH) from Escherichia coli (strain K12).